The following is a 373-amino-acid chain: MHNEAPITRRKSKRIYVGKVPVGDGAPIAVQSMTNTRTTDVAATVAQIKALERVGVDIVRVSVPTMDAAEAFRLIKQQVNVPLVADIHFDYRIALKVAEYGVDCLRINPGNIGNEERIRTVVDCARHYNIPIRIGVNGGSLEKDLQEKYGEPTPQALLESAMRHVDHLDRLNFDMFKVSVKASDVFLAVESYRLLAKQIDQPLHLGITEAGGARAGAVKSAIGLGLLLSEGIGDTLRISLAADPVEEVKVGFDILKSLRIRARGINFIACPTCSRQEFDVIGTVNALEERLEDIITPMDISIIGCVVNGPGEATVSTMGVTGGSKKSGFYEDGVRLRERLDNDNMIDQLEARIRAKATILDAARRIDIQQVEK.

The [4Fe-4S] cluster site is built by Cys270, Cys273, Cys305, and Glu312.

Belongs to the IspG family. It depends on [4Fe-4S] cluster as a cofactor.

It carries out the reaction (2E)-4-hydroxy-3-methylbut-2-enyl diphosphate + oxidized [flavodoxin] + H2O + 2 H(+) = 2-C-methyl-D-erythritol 2,4-cyclic diphosphate + reduced [flavodoxin]. The protein operates within isoprenoid biosynthesis; isopentenyl diphosphate biosynthesis via DXP pathway; isopentenyl diphosphate from 1-deoxy-D-xylulose 5-phosphate: step 5/6. Converts 2C-methyl-D-erythritol 2,4-cyclodiphosphate (ME-2,4cPP) into 1-hydroxy-2-methyl-2-(E)-butenyl 4-diphosphate. The polypeptide is 4-hydroxy-3-methylbut-2-en-1-yl diphosphate synthase (flavodoxin) (Erwinia tasmaniensis (strain DSM 17950 / CFBP 7177 / CIP 109463 / NCPPB 4357 / Et1/99)).